The sequence spans 817 residues: Anaphase-promoting complex subunit 4 (817 aa).

Phosphotyrosine is present on Tyr-469. Phosphoserine is present on residues Ser-757 and Ser-758. A Glycyl lysine isopeptide (Lys-Gly) (interchain with G-Cter in SUMO2) cross-link involves residue Lys-772. 2 positions are modified to phosphoserine: Ser-777 and Ser-779. Lys-798 participates in a covalent cross-link: Glycyl lysine isopeptide (Lys-Gly) (interchain with G-Cter in SUMO2).

Belongs to the APC4 family. The mammalian APC/C is composed at least of 14 distinct subunits ANAPC1, ANAPC2, CDC27/APC3, ANAPC4, ANAPC5, CDC16/APC6, ANAPC7, CDC23/APC8, ANAPC10, ANAPC11, CDC26/APC12, ANAPC13, ANAPC15 and ANAPC16 that assemble into a complex of at least 19 chains with a combined molecular mass of around 1.2 MDa; APC/C interacts with FZR1 and FBXO5. In the context of the APC/C complex, directly interacts with UBE2S.

Its subcellular location is the nucleus. Its pathway is protein modification; protein ubiquitination. In terms of biological role, component of the anaphase promoting complex/cyclosome (APC/C), a cell cycle-regulated E3 ubiquitin ligase that controls progression through mitosis and the G1 phase of the cell cycle. The APC/C complex acts by mediating ubiquitination and subsequent degradation of target proteins: it mainly mediates the formation of 'Lys-11'-linked polyubiquitin chains and, to a lower extent, the formation of 'Lys-48'- and 'Lys-63'-linked polyubiquitin chains. The APC/C complex catalyzes assembly of branched 'Lys-11'-/'Lys-48'-linked branched ubiquitin chains on target proteins. The protein is Anaphase-promoting complex subunit 4 (ANAPC4) of Pongo abelii (Sumatran orangutan).